Here is a 633-residue protein sequence, read N- to C-terminus: ATP-dependent zinc metalloprotease FtsH (633 aa).

Topologically, residues 1–19 (MTPSNEPGKQDQIPQPGPT) are cytoplasmic. Residues 20–40 (IPNQYSFLWLSAAIFLMFLWL) form a helical membrane-spanning segment. Topologically, residues 41–133 (QGNNQQQQQE…SRSGRPWWQE (93 aa)) are periplasmic. Residues 134 to 154 (LILGFLPWILLLALMFWFWGA) form a helical membrane-spanning segment. Over 155–633 (AQKRMTQGGG…LEEARSRETA (479 aa)) the chain is Cytoplasmic. Position 226–233 (226–233 (GPPGTGKT)) interacts with ATP. His-447 is a binding site for Zn(2+). Residue Glu-448 is part of the active site. Residues His-451 and Asp-523 each coordinate Zn(2+).

It in the central section; belongs to the AAA ATPase family. In the C-terminal section; belongs to the peptidase M41 family. As to quaternary structure, homohexamer. Requires Zn(2+) as cofactor.

Its subcellular location is the cell inner membrane. Functionally, acts as a processive, ATP-dependent zinc metallopeptidase for both cytoplasmic and membrane proteins. Plays a role in the quality control of integral membrane proteins. The polypeptide is ATP-dependent zinc metalloprotease FtsH (Marinobacter nauticus (strain ATCC 700491 / DSM 11845 / VT8) (Marinobacter aquaeolei)).